The primary structure comprises 336 residues: MSRVTLSRYLIEQTRSNNTPADLRFLIEVVARACKEISHAVSKGALGGVLGSMGTENVQGEVQKKLDVISNEILLEANEWGGHLAGMASEEMDNAYQIPGKYPKGAYLLVFDPLDGSSNIDINAPVGTIFSVLRCPNEYLSQNEALNEKAFLQPGTEQVAAGYAIYGPQTMLVLTLGDGVKGFTLDREMGSFVLTHEDITIPESTQEFAVNMSNQRHWEAPVQRYVSELLAGEDGPLKKNYNMRWVAAMVADVHRILTRGGLFMYPRDSREPSKPGKLRLMYEANPMSFLVEQAGGASTDGHQRILDIQPEGLHQRVAVYLGSKEEVERATAYHKA.

The Mg(2+) site is built by E90, D112, L114, and D115. Residues 115–118 (DGSS), N211, and K277 each bind substrate. E283 lines the Mg(2+) pocket.

The protein belongs to the FBPase class 1 family. In terms of assembly, homotetramer. Mg(2+) is required as a cofactor.

It localises to the cytoplasm. The enzyme catalyses beta-D-fructose 1,6-bisphosphate + H2O = beta-D-fructose 6-phosphate + phosphate. It participates in carbohydrate biosynthesis; gluconeogenesis. This is Fructose-1,6-bisphosphatase class 1 from Pseudomonas syringae pv. syringae (strain B728a).